Here is a 37-residue protein sequence, read N- to C-terminus: Large ribosomal subunit protein bL36c (37 aa).

Belongs to the bacterial ribosomal protein bL36 family.

Its subcellular location is the plastid. It is found in the chloroplast. The sequence is that of Large ribosomal subunit protein bL36c from Gnetum parvifolium (Small-leaved jointfir).